The sequence spans 419 residues: L-rhamnose isomerase (419 aa).

The Mn(2+) site is built by His-262, Asp-294, and Asp-296.

It belongs to the rhamnose isomerase family. In terms of assembly, homotetramer. It depends on Mn(2+) as a cofactor.

The protein resides in the cytoplasm. The catalysed reaction is L-rhamnopyranose = L-rhamnulose. It functions in the pathway carbohydrate degradation; L-rhamnose degradation; glycerone phosphate from L-rhamnose: step 1/3. In terms of biological role, catalyzes the interconversion of L-rhamnose and L-rhamnulose. This Escherichia fergusonii (strain ATCC 35469 / DSM 13698 / CCUG 18766 / IAM 14443 / JCM 21226 / LMG 7866 / NBRC 102419 / NCTC 12128 / CDC 0568-73) protein is L-rhamnose isomerase.